The sequence spans 328 residues: DNA-directed RNA polymerase subunit alpha (328 aa).

Residues 1–230 (MSNHGLQMPE…DHVSFFIQLE (230 aa)) are alpha N-terminal domain (alpha-NTD). The alpha C-terminal domain (alpha-CTD) stretch occupies residues 248 to 328 (RIRELLAQPV…EEYLEEKKAS (81 aa)).

The protein belongs to the RNA polymerase alpha chain family. As to quaternary structure, homodimer. The RNAP catalytic core consists of 2 alpha, 1 beta, 1 beta' and 1 omega subunit. When a sigma factor is associated with the core the holoenzyme is formed, which can initiate transcription.

The enzyme catalyses RNA(n) + a ribonucleoside 5'-triphosphate = RNA(n+1) + diphosphate. Its function is as follows. DNA-dependent RNA polymerase catalyzes the transcription of DNA into RNA using the four ribonucleoside triphosphates as substrates. The sequence is that of DNA-directed RNA polymerase subunit alpha from Salinibacter ruber (strain DSM 13855 / M31).